Consider the following 602-residue polypeptide: ATP-dependent RNA helicase DeaD (602 aa).

The Q motif signature appears at 6–34 (MTFSSFGLNSCIITALNDIGYVQPSPIQA). The Helicase ATP-binding domain occupies 37-208 (IPYLIKGKDV…RRFMKNPKEI (172 aa)). Residue 50–57 (AQTGSGKT) coordinates ATP. Residues 156 to 159 (DEAD) carry the DEAD box motif. The Helicase C-terminal domain occupies 231-378 (KTDALIRFLE…EVNLPKSDFL (148 aa)).

Belongs to the DEAD box helicase family. DeaD/CsdA subfamily.

It is found in the cytoplasm. It carries out the reaction ATP + H2O = ADP + phosphate + H(+). In terms of biological role, DEAD-box RNA helicase involved in various cellular processes at low temperature, including ribosome biogenesis, mRNA degradation and translation initiation. The sequence is that of ATP-dependent RNA helicase DeaD from Buchnera aphidicola subsp. Baizongia pistaciae (strain Bp).